Here is a 347-residue protein sequence, read N- to C-terminus: D-alanine--D-alanine ligase (347 aa).

The ATP-grasp domain maps to 131 to 333 (KRVLESAGIA…YPELIERLVD (203 aa)). Residue 161 to 216 (EEKLAYPVFTKPSNMGSSVGISKSENQEELRQALKLAFRYDSRVLVEQGVNAREIE) participates in ATP binding. Mg(2+)-binding residues include D287, E300, and N302.

The protein belongs to the D-alanine--D-alanine ligase family. Requires Mg(2+) as cofactor. It depends on Mn(2+) as a cofactor.

It is found in the cytoplasm. The enzyme catalyses 2 D-alanine + ATP = D-alanyl-D-alanine + ADP + phosphate + H(+). The protein operates within cell wall biogenesis; peptidoglycan biosynthesis. In terms of biological role, cell wall formation. The chain is D-alanine--D-alanine ligase from Streptococcus pneumoniae (strain ATCC BAA-255 / R6).